Reading from the N-terminus, the 2430-residue chain is MAPPAHKSILERSENVLMSPWKGKLIVQDRMLCDIALWSTYGAMIPTQLPQELDFKYVMKVSSLKKRLPEAAFRKQNYLEEKVCFQDLCFNLYEVELSNRQGENIDKLTECIKNKQLAIIKCLEDRGFFILLTSSALLSEPDFGGKQMGLHGLHLFRSPLSTGVKDLKVEDDISMKVIPILSTLNCALLETKKSLPEERIHPNTLVKRHFQELYKADRSPSLSVAPQDRMKDPTFLGKLPSGFDLIPPAEKCPSESLTQLNSYFSDPSAYILEVSTALDLLAEHPQSPCVSDGICDAGFSLVMTPDPEFLVSEAEVRKETETKKDSEEMLKAKKRVFPLSPASNLRVQPKRKASMPHMVQSKKVNLCRPFPKRTASRADNSSDSPTTLKLVKGQFPQKRKRGAEVLTAQFVQKTKLDRKNQEAPISKDVPVPTNAKRARKQEKSPVKTVPRAKPPVKKSPQKQRVNIVKGNENPRNRKQLQPVKGETASKLQSEISRGCQEDGISINSVQPENTTAAHNDLPENSIVNYDSQALNMLADLALSSATSSTPVSEARNLHCSSELPQNDVLLSKENSLRGTSDHEYHRGVKTQKGELLPNPSSDRKSNSGSDLTVSQDEESLVPCSQAPAKAQSALTEEMLESSDASQSSSVSVEHSYALLLTEHSKKHLQEREILSPLFPRNGTKSPEAATPVGKVMPFRHQPGLLLQQKPPDDPVVKPKDRPPSARVKKSSCSRIVLSCDDSVKITFKCETEYAFSLDSKYTNNPLEKTVVRALHGPWNTDLPDNVEEVKLLLHMWVALFYSNQNKIIRSSRKVVEHSNPAKYVSINSTLESCELREIEESLGLEKCSADSLLETNEISRAHAAEVSFRDPNCLLPFIKTPLTQGLELCVQNEQKKTFARECDPDTQEDQNFICSYNNEVTGEEAKQESLETSNLVLSGIGSTQTNGPSVPSEEEIVQPLDSTRVASYSGTVTQATFTRTYDGPGSQPVICQSSVYGTLENKVDILDAAVQTKTGTLQDLIQHGSPINNECHPSLERKDDNMGCAVINPEPITLTFEKNAHVPIQTEGVNTADERTTFKKELIKQVSPAASLRHPVSTSENARTQGLRDIPSLVVAGQKGTKYLCASSVGGETLDKAVCSLQKETPLPVSLPSDKTMVMEALSLAKSSSHLSPSEEVRCTQDFLSQTQSLLGLSSEGLLELTQVEVDSSSASTTLGRQCSLNCISSGCHTSGDSLELRKNHKNGPNTENMNLEAFDSVFIKQTSLSVSREVSLELSEEDSDIDLALTISPPTSPREEMPAGEIEQFEEAPFSNLELQDVAEEIGEPEEVALTESREVSSADNVSVYPSVSEEPVENKERKGDNLQPVTLILSKENCTLEIAEEINVTSDFPFDSVIEEVSPASSPEPPVPVKETRPYQAVTPCILKLHGTQCEKSNQISQCESEDLGITEKENVFVGPTHPVGQDNFTQVQQMQVSAEMPLILTDHPGRTGRPTLPGKVTEEIVSSEHDEGLSFSGKVQCYGRELNQPASAAKCTGDFSPSPEKLVKSGNPLQPVSIENRNLDLKHLVLESSEPPFGPRNVIENKSLSDTLVSTTAPSGIVNVSVKQQTSPKSSQNHLFPGDLKTDEGIYLQVKSLTAASVDGAYSTQGCMCSVVPTLCSSSDNATLTHYVRPINAEPVFQAQEIPAGRMASLLKNGEPEAELHKETTGPGTAGPQSNTTSSLKGERKAIHTLQDVSTCETKELLNVGVSSLCAGPYQNTADTKENLSKEPLASFVSESFDTSVCGIATEHVEIENSGEGLRAEAGSETLGRDGEVGVNSDMHYELSGDSDLDLLGDCRNPRLDLEDSYTLRGSYTRKKDVPTDGYESSLNFHNNNQEDWGCSSWVPGMETSLPPGHWTAAVKKEEKCVPPYVQIRDLHGILRTYANFSITKELKDTMRTSHGLRRHPSFSANCGLPSSWTSTWQVADDLTQNTLDLEYLRFAHKLKQTIKNGDSQHSASSANVFPKESPTQISIGAFPSTKISEAPFLHPAPRSRSPLLVTVVESDPRPQGQPRRGYTASSLDSSSSWRERCSHNRDLRNSQRNHTVSFHLNKLKYNSTVKESRNDISLILNEYAEFNKVMKNSNQFIFQDKELNDVSGEATAQEMYLPFPGRSASYEDIIIDVCTNLHVKLRSVVKEACKSTFLFYLVETEDKSFFVRTKNLLRKGGHTEIEPQHFCQAFHRENDTLIIIIRNEDISSHLHQIPSLLKLKHFPSVIFAGVDSPGDVLDHTYQELFRAGGFVISDDKILEAVTLVQLKEIIKILEKLNGNGRWKWLLHYRENKKLKEDERVDSTAHKKNIMLKSFQSANIIELLHYHQCDSRSSTKAEILKCLLNLQIQHIDARFAVLLTDKPTIPREVFENSGILVTDVNNFIENIEKIAAPFRSSYW.

Ser-19, Ser-219, and Ser-384 each carry phosphoserine. Disordered regions lie at residues Leu-416 to Ala-488 and Arg-577 to Ser-648. Position 685 is a phosphoserine (Ser-685). Residues Leu-704–Val-727 are disordered. Over residues Pro-710–Pro-723 the composition is skewed to basic and acidic residues. Phosphoserine is present on residues Ser-1025, Ser-1087, and Ser-1172. A disordered region spans residues Leu-1331–Lys-1360. Position 1541 is a phosphoserine (Ser-1541). A disordered region spans residues Glu-1700–Arg-1727. A compositionally biased stretch (polar residues) spans Gly-1714 to Leu-1723. A Phosphoserine modification is found at Ser-1848. Lys-2007 is covalently cross-linked (Glycyl lysine isopeptide (Lys-Gly) (interchain with G-Cter in SUMO2)). Residues Ser-2009, Ser-2037, Ser-2062, and Ser-2066 each carry the phosphoserine modification. Residues Ser-2046–Trp-2069 form a disordered region.

This sequence belongs to the TASOR family.

The sequence is that of Protein TASOR 2 from Homo sapiens (Human).